The primary structure comprises 360 residues: tRNA N6-adenosine threonylcarbamoyltransferase (360 aa).

Positions 115 and 119 each coordinate Fe cation. Residues 137–141, Asp-170, Gly-183, and Asn-283 contribute to the substrate site; that span reads LVSGG. Position 311 (Asp-311) interacts with Fe cation.

This sequence belongs to the KAE1 / TsaD family. Requires Fe(2+) as cofactor.

Its subcellular location is the cytoplasm. It carries out the reaction L-threonylcarbamoyladenylate + adenosine(37) in tRNA = N(6)-L-threonylcarbamoyladenosine(37) in tRNA + AMP + H(+). Functionally, required for the formation of a threonylcarbamoyl group on adenosine at position 37 (t(6)A37) in tRNAs that read codons beginning with adenine. Is involved in the transfer of the threonylcarbamoyl moiety of threonylcarbamoyl-AMP (TC-AMP) to the N6 group of A37, together with TsaE and TsaB. TsaD likely plays a direct catalytic role in this reaction. The polypeptide is tRNA N6-adenosine threonylcarbamoyltransferase (Sinorhizobium medicae (strain WSM419) (Ensifer medicae)).